A 320-amino-acid chain; its full sequence is ATP-dependent 6-phosphofructokinase (320 aa).

An ATP-binding site is contributed by Gly-12. ADP contacts are provided by residues 22–26 (RGVVR) and 55–60 (RYSVSD). ATP is bound by residues 73–74 (RF) and 103–106 (GDGS). Residue Asp-104 participates in Mg(2+) binding. Residue 126 to 128 (TID) participates in substrate binding. The active-site Proton acceptor is the Asp-128. Arg-155 contributes to the ADP binding site. Substrate is bound by residues Arg-163 and 170–172 (MGR). ADP contacts are provided by residues 186-188 (GCE), Lys-212, and 214-216 (KKH). Substrate-binding positions include Glu-223, Arg-244, and 250-253 (HIQR).

It belongs to the phosphofructokinase type A (PFKA) family. ATP-dependent PFK group I subfamily. Prokaryotic clade 'B1' sub-subfamily. Homotetramer. Mg(2+) is required as a cofactor.

The protein localises to the cytoplasm. The catalysed reaction is beta-D-fructose 6-phosphate + ATP = beta-D-fructose 1,6-bisphosphate + ADP + H(+). It functions in the pathway carbohydrate degradation; glycolysis; D-glyceraldehyde 3-phosphate and glycerone phosphate from D-glucose: step 3/4. Allosterically activated by ADP and other diphosphonucleosides, and allosterically inhibited by phosphoenolpyruvate. In terms of biological role, catalyzes the phosphorylation of D-fructose 6-phosphate to fructose 1,6-bisphosphate by ATP, the first committing step of glycolysis. The sequence is that of ATP-dependent 6-phosphofructokinase from Salmonella gallinarum (strain 287/91 / NCTC 13346).